An 811-amino-acid polypeptide reads, in one-letter code: Probable disease resistance protein At5g04720 (811 aa).

In terms of domain architecture, RPW8 spans 1-147 (MADIIGGEVV…KVDSLNEKLG (147 aa)). NB-ARC domains follow at residues 180-242 (VGLD…VSQS) and 312-437 (TYDV…NVLV). 207–214 (GMSGSGKT) lines the ATP pocket. 5 LRR repeats span residues 650-674 (FPKLSDLTIDHCDDLLELPSTICGI), 676-699 (SLNSISITNCPRIKELPKNLSKLK), 700-722 (ALQLLRLYACHELNSLPVEICEL), 724-746 (RLKYVDISQCVSLSSLPEKIGKV), and 748-769 (TLEKIDTRECSLSSIPNSVVLL).

This sequence belongs to the disease resistance NB-LRR family.

Probable disease resistance protein. This is Probable disease resistance protein At5g04720 from Arabidopsis thaliana (Mouse-ear cress).